The following is a 670-amino-acid chain: FAD-binding monooxygenase ausC (670 aa).

FAD is bound by residues 144 to 147 (TWYW), 156 to 157 (DT), and tyrosine 162. 154–156 (MCD) is an NADP(+) binding site. NADP(+) is bound by residues 299-305 (TGASAVQ) and 322-323 (RT).

Belongs to the FAD-binding monooxygenase family. FAD is required as a cofactor.

It carries out the reaction preaustinoid A + AH2 + O2 = preaustinoid A1 + A + H2O. Its pathway is secondary metabolite biosynthesis; terpenoid biosynthesis. FAD-binding monooxygenase; part of the gene cluster that mediates the biosynthesis of calidodehydroaustin, a fungal meroterpenoid. The first step of the pathway is the synthesis of 3,5-dimethylorsellinic acid by the polyketide synthase ausA. 3,5-dimethylorsellinic acid is then prenylated by the polyprenyl transferase ausN. Further epoxidation by the FAD-dependent monooxygenase ausM and cyclization by the probable terpene cyclase ausL lead to the formation of protoaustinoid A. Protoaustinoid A is then oxidized to spiro-lactone preaustinoid A3 by the combined action of the FAD-binding monooxygenases ausB and ausC, and the dioxygenase ausE. Acid-catalyzed keto-rearrangement and ring contraction of the tetraketide portion of preaustinoid A3 by ausJ lead to the formation of preaustinoid A4. The aldo-keto reductase ausK, with the help of ausH, is involved in the next step by transforming preaustinoid A4 into isoaustinone which is in turn hydroxylated by the P450 monooxygenase ausI to form austinolide. The cytochrome P450 monooxygenase ausG modifies austinolide to austinol. Austinol is further acetylated to austin by the O-acetyltransferase ausP, which spontaneously changes to dehydroaustin. The cytochrome P450 monooxygenase ausR then converts dehydroaustin is into 7-dehydrodehydroaustin. The hydroxylation catalyzed by ausR permits the O-acetyltransferase ausQ to add an additional acetyl group to the molecule, leading to the formation of acetoxydehydroaustin. The short chain dehydrogenase ausT catalyzes the reduction of the double bond present between carbon atoms 1 and 2 to convert 7-dehydrodehydroaustin into 1,2-dihydro-7-hydroxydehydroaustin. AusQ catalyzes not only an acetylation reaction but also the addition of the PKS ausV diketide product to 1,2-dihydro-7-hydroxydehydroaustin, forming precalidodehydroaustin. Finally, the iron/alpha-ketoglutarate-dependent dioxygenase converts precalidodehydroaustin into calidodehydroaustin. This Aspergillus calidoustus protein is FAD-binding monooxygenase ausC.